The following is a 409-amino-acid chain: Killer cell lectin-like receptor subfamily G member 2 (409 aa).

Positions 1–120 are disordered; it reads MEESWEAAPG…GAEPAPSAWA (120 aa). The segment covering 41 to 53 has biased composition (low complexity); sequence PEGPESSPSPAGA. Residues 72 to 81 are compositionally biased toward pro residues; it reads SPRPGSPRVP. Residues 104 to 120 show a composition bias toward low complexity; it reads PRNGEAPGAEPAPSAWA. Position 158 is a phosphoserine (serine 158). Residues 193-216 are disordered; sequence TESGCDAEGRASPAEGSAGSPGSP. Positions 202–216 are enriched in low complexity; it reads RASPAEGSAGSPGSP. A helical membrane pass occupies residues 263–283; sequence WALAFMAVLLAVSGVVIVVLA. The region spanning 300 to 405 is the C-type lectin domain; the sequence is SEEHCYYFSA…CSTPRPWVCA (106 aa). 2 disulfide bridges follow: cysteine 321–cysteine 404 and cysteine 383–cysteine 396.

It localises to the membrane. The protein is Killer cell lectin-like receptor subfamily G member 2 (KLRG2) of Homo sapiens (Human).